The following is a 398-amino-acid chain: Protein-glutamate methylesterase/protein-glutamine glutaminase (398 aa).

Positions Lys-4–Leu-121 constitute a Response regulatory domain. At Asp-55 the chain carries 4-aspartylphosphate. The interval Arg-133–Ser-200 is disordered. Polar residues-rich tracts occupy residues Arg-136–Ile-146 and Arg-168–Ser-200. A CheB-type methylesterase domain is found at Ser-205–Gly-398. Catalysis depends on residues Ser-217, His-244, and Asp-340.

It belongs to the CheB family. In terms of processing, phosphorylated by CheA. Phosphorylation of the N-terminal regulatory domain activates the methylesterase activity.

It localises to the cytoplasm. It catalyses the reaction [protein]-L-glutamate 5-O-methyl ester + H2O = L-glutamyl-[protein] + methanol + H(+). The catalysed reaction is L-glutaminyl-[protein] + H2O = L-glutamyl-[protein] + NH4(+). Its function is as follows. Involved in chemotaxis. Part of a chemotaxis signal transduction system that modulates chemotaxis in response to various stimuli. Catalyzes the demethylation of specific methylglutamate residues introduced into the chemoreceptors (methyl-accepting chemotaxis proteins or MCP) by CheR. Also mediates the irreversible deamidation of specific glutamine residues to glutamic acid. This is Protein-glutamate methylesterase/protein-glutamine glutaminase from Shewanella frigidimarina (strain NCIMB 400).